Here is a 461-residue protein sequence, read N- to C-terminus: Cysteine--tRNA ligase (461 aa).

Zn(2+) is bound at residue C28. The 'HIGH' region motif lies at 30–40; that stretch reads ITVYDLCHIGH. Positions 209, 234, and 238 each coordinate Zn(2+). The 'KMSKS' region signature appears at 266–270; that stretch reads KMSKS. ATP is bound at residue K269.

The protein belongs to the class-I aminoacyl-tRNA synthetase family. Monomer. It depends on Zn(2+) as a cofactor.

The protein localises to the cytoplasm. The catalysed reaction is tRNA(Cys) + L-cysteine + ATP = L-cysteinyl-tRNA(Cys) + AMP + diphosphate. The chain is Cysteine--tRNA ligase from Escherichia coli O6:K15:H31 (strain 536 / UPEC).